The following is a 190-amino-acid chain: Peptidyl-tRNA hydrolase (190 aa).

Phe-14 contacts tRNA. The active-site Proton acceptor is the His-19. 3 residues coordinate tRNA: Met-64, Asn-66, and Asn-112.

This sequence belongs to the PTH family. Monomer.

The protein resides in the cytoplasm. The enzyme catalyses an N-acyl-L-alpha-aminoacyl-tRNA + H2O = an N-acyl-L-amino acid + a tRNA + H(+). Functionally, hydrolyzes ribosome-free peptidyl-tRNAs (with 1 or more amino acids incorporated), which drop off the ribosome during protein synthesis, or as a result of ribosome stalling. Its function is as follows. Catalyzes the release of premature peptidyl moieties from peptidyl-tRNA molecules trapped in stalled 50S ribosomal subunits, and thus maintains levels of free tRNAs and 50S ribosomes. In Staphylococcus saprophyticus subsp. saprophyticus (strain ATCC 15305 / DSM 20229 / NCIMB 8711 / NCTC 7292 / S-41), this protein is Peptidyl-tRNA hydrolase.